The primary structure comprises 119 residues: Large ribosomal subunit protein uL18 (119 aa).

The protein belongs to the universal ribosomal protein uL18 family. Part of the 50S ribosomal subunit; part of the 5S rRNA/L5/L18/L25 subcomplex. Contacts the 5S and 23S rRNAs.

Its function is as follows. This is one of the proteins that bind and probably mediate the attachment of the 5S RNA into the large ribosomal subunit, where it forms part of the central protuberance. In Sorangium cellulosum (strain So ce56) (Polyangium cellulosum (strain So ce56)), this protein is Large ribosomal subunit protein uL18.